Consider the following 512-residue polypeptide: Mannose-1-phosphate guanylyltransferase (512 aa).

It belongs to the mannose-6-phosphate isomerase type 2 family.

It carries out the reaction alpha-D-mannose 1-phosphate + GTP + H(+) = GDP-alpha-D-mannose + diphosphate. The chain is Mannose-1-phosphate guanylyltransferase (noeJ) from Sinorhizobium fredii (strain NBRC 101917 / NGR234).